The sequence spans 94 residues: Large ribosomal subunit protein eL43A (94 aa).

The C4-type zinc finger occupies 39–62 (CPFCGRNTVKRTAAGIWCCNGKGC).

Belongs to the eukaryotic ribosomal protein eL43 family. Component of the large ribosomal subunit (LSU). Mature yeast ribosomes consist of a small (40S) and a large (60S) subunit. The 40S small subunit contains 1 molecule of ribosomal RNA (18S rRNA) and at least 33 different proteins. The large 60S subunit contains 3 rRNA molecules (25S, 5.8S and 5S rRNA) and at least 46 different proteins.

It localises to the cytoplasm. Component of the ribosome, a large ribonucleoprotein complex responsible for the synthesis of proteins in the cell. The small ribosomal subunit (SSU) binds messenger RNAs (mRNAs) and translates the encoded message by selecting cognate aminoacyl-transfer RNA (tRNA) molecules. The large subunit (LSU) contains the ribosomal catalytic site termed the peptidyl transferase center (PTC), which catalyzes the formation of peptide bonds, thereby polymerizing the amino acids delivered by tRNAs into a polypeptide chain. The nascent polypeptides leave the ribosome through a tunnel in the LSU and interact with protein factors that function in enzymatic processing, targeting, and the membrane insertion of nascent chains at the exit of the ribosomal tunnel. The chain is Large ribosomal subunit protein eL43A (rpl4301) from Schizosaccharomyces pombe (strain 972 / ATCC 24843) (Fission yeast).